Consider the following 375-residue polypeptide: Chaperone protein DnaJ (375 aa).

The J domain maps to 5 to 69 (DYYEILGIDK…QKRAQYDQFG (65 aa)). Residues 131-213 (GKETDIEIPK…CGGSGTVQKN (83 aa)) form a CR-type zinc finger. Cysteine 144, cysteine 147, cysteine 161, cysteine 164, cysteine 187, cysteine 190, cysteine 201, and cysteine 204 together coordinate Zn(2+). CXXCXGXG motif repeat units lie at residues 144-151 (CDTCNGSG), 161-168 (CSHCHGSG), 187-194 (CNYCQGTG), and 201-208 (CNTCGGSG).

The protein belongs to the DnaJ family. As to quaternary structure, homodimer. Zn(2+) is required as a cofactor.

The protein resides in the cytoplasm. Functionally, participates actively in the response to hyperosmotic and heat shock by preventing the aggregation of stress-denatured proteins and by disaggregating proteins, also in an autonomous, DnaK-independent fashion. Unfolded proteins bind initially to DnaJ; upon interaction with the DnaJ-bound protein, DnaK hydrolyzes its bound ATP, resulting in the formation of a stable complex. GrpE releases ADP from DnaK; ATP binding to DnaK triggers the release of the substrate protein, thus completing the reaction cycle. Several rounds of ATP-dependent interactions between DnaJ, DnaK and GrpE are required for fully efficient folding. Also involved, together with DnaK and GrpE, in the DNA replication of plasmids through activation of initiation proteins. This chain is Chaperone protein DnaJ, found in Oceanobacillus iheyensis (strain DSM 14371 / CIP 107618 / JCM 11309 / KCTC 3954 / HTE831).